Reading from the N-terminus, the 201-residue chain is UPF0301 protein Smed_0532 (201 aa).

Belongs to the UPF0301 (AlgH) family.

In Sinorhizobium medicae (strain WSM419) (Ensifer medicae), this protein is UPF0301 protein Smed_0532.